We begin with the raw amino-acid sequence, 766 residues long: MSVQSSSGSLEGPPSWSQLSTSPTPGSAAAARSLLNHTPPSGRPREGAMDELHSLDPRRQELLEARFTGVASGSTGSTGSCSVGAKASTNNESSNHSFGSLGSLSDKESETPEKKQSESSRGRKRKAENQNESSQGKSIGGRGHKISDYFEYQGGNGSSPVRGIPPAIRSPQNSHSHSTPSSSVRPNSPSPTALAFGDHPIVQPKQLSFKIIQTDLTMLKLAALESNKIQDLEKKEGRIDDLLRANCDLRRQIDEQQKLLEKYKERLNKCISMSKKLLIEKSTQEKLSSREKSMQDRLRLGHFTTVRHGASFTEQWTDGFAFQNLVKQQEWVNQQREDIERQRKLLAKRKPPTANNSQAPSTNSEPKQRKNKAVNGAENDPFVRPNLPQLLTLAEYHEQEEIFKLRLGHLKKEEAEIQAELERLERVRNLHIRELKRINNEDNSQFKDHPTLNERYLLLHLLGRGGFSEVYKAFDLYEQRYAAVKIHQLNKSWRDEKKENYHKHACREYRIHKELDHPRIVKLYDYFSLDTDTFCTVLEYCEGNDLDFYLKQHKLMSEKEARSIVMQIVNALRYLNEIKPPIIHYDLKPGNILLVDGTACGEIKITDFGLSKIMDDDSYGVDGMDLTSQGAGTYWYLPPECFVVGKEPPKISNKVDVWSVGVIFFQCLYGRKPFGHNQSQQDILQENTILKATEVQFPVKPVVSSEAKAFIRRCLAYRKEDRFDVHQLANDPYLLPHMRRSNSSGNLHMAGLTASPTPPSSSIITY.

Met-1 is subject to N-acetylmethionine. A compositionally biased stretch (polar residues) spans 1–19 (MSVQSSSGSLEGPPSWSQL). A disordered region spans residues 1-197 (MSVQSSSGSL…SPSPTALAFG (197 aa)). A compositionally biased stretch (low complexity) spans 20–33 (STSPTPGSAAAARS). Thr-38 carries the phosphothreonine modification. Positions 43–64 (RPREGAMDELHSLDPRRQELLE) are enriched in basic and acidic residues. Ser-54, Ser-77, and Ser-80 each carry phosphoserine. Over residues 68-85 (TGVASGSTGSTGSCSVGA) the composition is skewed to low complexity. Polar residues predominate over residues 87–103 (ASTNNESSNHSFGSLGS). Residues 105 to 121 (SDKESETPEKKQSESSR) show a composition bias toward basic and acidic residues. Residues Ser-134, Ser-159, Ser-174, and Ser-176 each carry the phosphoserine modification. Low complexity predominate over residues 170-192 (SPQNSHSHSTPSSSVRPNSPSPT). The stretch at 230–281 (QDLEKKEGRIDDLLRANCDLRRQIDEQQKLLEKYKERLNKCISMSKKLLIEK) forms a coiled coil. The disordered stretch occupies residues 346 to 383 (LAKRKPPTANNSQAPSTNSEPKQRKNKAVNGAENDPFV). Positions 353-365 (TANNSQAPSTNSE) are enriched in polar residues. A coiled-coil region spans residues 397–445 (HEQEEIFKLRLGHLKKEEAEIQAELERLERVRNLHIRELKRINNEDNSQ). The Protein kinase domain occupies 456–734 (YLLLHLLGRG…VHQLANDPYL (279 aa)). ATP contacts are provided by residues 462 to 470 (LGRGGFSEV) and Lys-485. Asp-586 serves as the catalytic Proton acceptor. At Ser-743 the chain carries Phosphoserine.

It belongs to the protein kinase superfamily. Ser/Thr protein kinase family. In terms of assembly, heterodimer with TLK2. It depends on Mg(2+) as a cofactor. Widely expressed. Present in fetal placenta, liver, kidney and pancreas but not heart or skeletal muscle. Also found in adult cell lines. Isoform 3 is ubiquitously expressed in all tissues examined.

It is found in the nucleus. The catalysed reaction is L-seryl-[protein] + ATP = O-phospho-L-seryl-[protein] + ADP + H(+). The enzyme catalyses L-threonyl-[protein] + ATP = O-phospho-L-threonyl-[protein] + ADP + H(+). Cell-cycle regulated, maximal activity in S-phase. Inactivated by phosphorylation at Ser-743, potentially by CHEK1. In terms of biological role, rapidly and transiently inhibited by phosphorylation following the generation of DNA double-stranded breaks during S-phase. This is cell cycle checkpoint and ATM-pathway dependent and appears to regulate processes involved in chromatin assembly. Isoform 3 phosphorylates and enhances the stability of the t-SNARE SNAP23, augmenting its assembly with syntaxin. Isoform 3 protects the cells from the ionizing radiation by facilitating the repair of DSBs. In vitro, phosphorylates histone H3 at 'Ser-10'. The polypeptide is Serine/threonine-protein kinase tousled-like 1 (TLK1) (Homo sapiens (Human)).